The sequence spans 171 residues: Cytochrome c oxidase subunit 5, mitochondrial (171 aa).

Residues 1-27 constitute a mitochondrion transit peptide; sequence MLRTPTVSALVRNVAVRAAKPTMAVRA. At 28–100 the chain is on the mitochondrial matrix side; that stretch reads ASTMPISNPT…ALPPPGEQKK (73 aa). A helical transmembrane segment spans residues 101 to 123; it reads VLAYTVAGVFLSFVIFATMRAFA. The Mitochondrial intermembrane portion of the chain corresponds to 124–171; that stretch reads KPPPATMTKEWQEATNEFLKAQKSDPLTGLTSEGYNGKGHVQSPSASA. Residues 145 to 171 are disordered; sequence QKSDPLTGLTSEGYNGKGHVQSPSASA.

This sequence belongs to the cytochrome c oxidase IV family. Component of the cytochrome c oxidase (complex IV, CIV), a multisubunit enzyme composed of 11 subunits. The complex is composed of a catalytic core of 3 subunits Cox1, Cox2 and Cox3, encoded in the mitochondrial DNA, and 8 supernumerary subunits Cox4, Cox5a/Cox5, Cox6, Cox7, Cox8, Cox7a/Cox9, Cox6b/Cox12 and Cox6a/Cox13, which are encoded in the nuclear genome. The complex exists as a monomer or a dimer and forms respiratory supercomplexes (SCs) in the inner mitochondrial membrane with NADH-ubiquinone oxidoreductase (complex I, CI) and ubiquinol-cytochrome c oxidoreductase (cytochrome b-c1 complex, complex III, CIII), resulting in various different assemblies (supercomplexes I(1)IV(1), I(1)III(3)IV(2), III(2)IV(1) and III(2)IV(2) as well as larger supercomplexes of compositions like I(1)III(2)IV(5-6)).

The protein resides in the mitochondrion inner membrane. Its pathway is energy metabolism; oxidative phosphorylation. Component of the cytochrome c oxidase, the last enzyme in the mitochondrial electron transport chain which drives oxidative phosphorylation. The respiratory chain contains 3 multisubunit complexes succinate dehydrogenase (complex II, CII), ubiquinol-cytochrome c oxidoreductase (cytochrome b-c1 complex, complex III, CIII) and cytochrome c oxidase (complex IV, CIV), that cooperate to transfer electrons derived from NADH and succinate to molecular oxygen, creating an electrochemical gradient over the inner membrane that drives transmembrane transport and the ATP synthase. Cytochrome c oxidase is the component of the respiratory chain that catalyzes the reduction of oxygen to water. Electrons originating from reduced cytochrome c in the intermembrane space (IMS) are transferred via the dinuclear copper A center (CU(A)) of Cox2 and heme A of Cox1 to the active site in Cox1, a binuclear center (BNC) formed by heme A3 and copper B (CU(B)). The BNC reduces molecular oxygen to 2 water molecules using 4 electrons from cytochrome c in the IMS and 4 protons from the mitochondrial matrix. This chain is Cytochrome c oxidase subunit 5, mitochondrial (cya-4), found in Neurospora crassa (strain ATCC 24698 / 74-OR23-1A / CBS 708.71 / DSM 1257 / FGSC 987).